Consider the following 22-residue polypeptide: Caerin-3.1 (22 aa).

Lys-22 carries the post-translational modification Lysine amide.

It belongs to the frog skin active peptide (FSAP) family. Caerin subfamily. Expressed by the skin dorsal glands.

The protein resides in the secreted. Antibacterial peptide with narrow spectrum of activity. Inhibits the formation of NO by neuronal nitric oxide synthase. The protein is Caerin-3.1 of Litoria rothii (Roth's tree frog).